A 196-amino-acid chain; its full sequence is Ribosome maturation factor RimP (196 aa).

The protein belongs to the RimP family.

It is found in the cytoplasm. Required for maturation of 30S ribosomal subunits. The chain is Ribosome maturation factor RimP from Dinoroseobacter shibae (strain DSM 16493 / NCIMB 14021 / DFL 12).